A 326-amino-acid polypeptide reads, in one-letter code: DNA polymerase III subunit delta' (326 aa).

DNA polymerase III contains a core (composed of alpha, epsilon and theta chains) that associates with a tau subunit. This core dimerizes to form the POLIII' complex. PolIII' associates with the gamma complex (composed of gamma, delta, delta', psi and chi chains) and with the beta chain to form the complete DNA polymerase III complex.

The catalysed reaction is DNA(n) + a 2'-deoxyribonucleoside 5'-triphosphate = DNA(n+1) + diphosphate. Its function is as follows. DNA polymerase III is a complex, multichain enzyme responsible for most of the replicative synthesis in bacteria. This DNA polymerase also exhibits 3' to 5' exonuclease activity. This is DNA polymerase III subunit delta' (holB) from Buchnera aphidicola subsp. Acyrthosiphon pisum (strain APS) (Acyrthosiphon pisum symbiotic bacterium).